We begin with the raw amino-acid sequence, 56 residues long: Large ribosomal subunit protein bL33B (56 aa).

The protein belongs to the bacterial ribosomal protein bL33 family.

The chain is Large ribosomal subunit protein bL33B from Cutibacterium acnes (strain DSM 16379 / KPA171202) (Propionibacterium acnes).